Consider the following 807-residue polypeptide: DNA gyrase subunit B (807 aa).

Positions 429–543 (SELFIVEGDS…KGYLYIAQPP (115 aa)) constitute a Toprim domain. Mg(2+)-binding residues include Glu435, Asp508, and Asp510.

This sequence belongs to the type II topoisomerase GyrB family. As to quaternary structure, heterotetramer, composed of two GyrA and two GyrB chains. In the heterotetramer, GyrA contains the active site tyrosine that forms a transient covalent intermediate with DNA, while GyrB binds cofactors and catalyzes ATP hydrolysis. Mg(2+) is required as a cofactor. The cofactor is Mn(2+). It depends on Ca(2+) as a cofactor.

It localises to the cytoplasm. It catalyses the reaction ATP-dependent breakage, passage and rejoining of double-stranded DNA.. In terms of biological role, a type II topoisomerase that negatively supercoils closed circular double-stranded (ds) DNA in an ATP-dependent manner to modulate DNA topology and maintain chromosomes in an underwound state. Negative supercoiling favors strand separation, and DNA replication, transcription, recombination and repair, all of which involve strand separation. Also able to catalyze the interconversion of other topological isomers of dsDNA rings, including catenanes and knotted rings. Type II topoisomerases break and join 2 DNA strands simultaneously in an ATP-dependent manner. The chain is DNA gyrase subunit B from Rickettsia typhi (strain ATCC VR-144 / Wilmington).